Here is a 246-residue protein sequence, read N- to C-terminus: MKLIIGVITLFPQMFDALKSGVIGRALKQDRLTLSCWNPRDYATDPHRTVDDRPYGGGPGMVMKFEPLALALKAAKAQLGENTKVIHLTPQGKLLTQAIVREKIHASPLILLAGRYEGIDERLIEAEVDEEWSIGDYILSGGELPAMVLIDAMTRLLPGVLGHKDSASQDSFTAGLLDYPHYTRPEKIADRPVPSVLLSGDHEAISRWRLKQSLGRTWQRRQDLIKRRSLSENEQRLLDEFFEESS.

Residues Gly-114 and 134-139 (IGDYIL) each bind S-adenosyl-L-methionine.

Belongs to the RNA methyltransferase TrmD family. Homodimer.

It localises to the cytoplasm. It carries out the reaction guanosine(37) in tRNA + S-adenosyl-L-methionine = N(1)-methylguanosine(37) in tRNA + S-adenosyl-L-homocysteine + H(+). Its function is as follows. Specifically methylates guanosine-37 in various tRNAs. In Coxiella burnetii (strain RSA 493 / Nine Mile phase I), this protein is tRNA (guanine-N(1)-)-methyltransferase.